Consider the following 276-residue polypeptide: NH(3)-dependent NAD(+) synthetase (276 aa).

43–50 (GISGGVDS) lines the ATP pocket. A Mg(2+)-binding site is contributed by Asp-49. Arg-146 contacts deamido-NAD(+). Residue Thr-166 participates in ATP binding. Glu-171 contacts Mg(2+). Residues Lys-179 and Asp-186 each coordinate deamido-NAD(+). Positions 195 and 217 each coordinate ATP. 266 to 267 (HK) lines the deamido-NAD(+) pocket.

This sequence belongs to the NAD synthetase family. In terms of assembly, homodimer.

The catalysed reaction is deamido-NAD(+) + NH4(+) + ATP = AMP + diphosphate + NAD(+) + H(+). It functions in the pathway cofactor biosynthesis; NAD(+) biosynthesis; NAD(+) from deamido-NAD(+) (ammonia route): step 1/1. In terms of biological role, catalyzes the ATP-dependent amidation of deamido-NAD to form NAD. Uses ammonia as a nitrogen source. This chain is NH(3)-dependent NAD(+) synthetase, found in Vibrio campbellii (strain ATCC BAA-1116).